The chain runs to 332 residues: UDP-3-O-acylglucosamine N-acyltransferase (332 aa).

The active-site Proton acceptor is histidine 231.

The protein belongs to the transferase hexapeptide repeat family. LpxD subfamily. As to quaternary structure, homotrimer.

The catalysed reaction is a UDP-3-O-[(3R)-3-hydroxyacyl]-alpha-D-glucosamine + a (3R)-hydroxyacyl-[ACP] = a UDP-2-N,3-O-bis[(3R)-3-hydroxyacyl]-alpha-D-glucosamine + holo-[ACP] + H(+). It functions in the pathway bacterial outer membrane biogenesis; LPS lipid A biosynthesis. In terms of biological role, catalyzes the N-acylation of UDP-3-O-acylglucosamine using 3-hydroxyacyl-ACP as the acyl donor. Is involved in the biosynthesis of lipid A, a phosphorylated glycolipid that anchors the lipopolysaccharide to the outer membrane of the cell. The polypeptide is UDP-3-O-acylglucosamine N-acyltransferase (Ruthia magnifica subsp. Calyptogena magnifica).